The sequence spans 109 residues: Fluoride-specific ion channel FluC (109 aa).

The next 3 membrane-spanning stretches (helical) occupy residues 21–41 (LTLN…GFFV), 52–72 (ILFS…YFLY), and 84–104 (IIFF…GFWI).

It belongs to the fluoride channel Fluc/FEX (TC 1.A.43) family.

Its subcellular location is the cell inner membrane. It carries out the reaction fluoride(in) = fluoride(out). Functionally, fluoride-specific ion channel. Important for reducing fluoride concentration in the cell, thus reducing its toxicity. This chain is Fluoride-specific ion channel FluC, found in Prochlorococcus marinus (strain MIT 9301).